Reading from the N-terminus, the 510-residue chain is Serine carboxypeptidase 1 (510 aa).

The N-terminal stretch at 1–25 (MARRGRRSLASPAVAIALFVFLAYG) is a signal peptide. Residues 26–36 (GGGGGGGVCEA) constitute a propeptide that is removed on maturation. Disulfide bonds link Cys98-Cys399, Cys262-Cys274, and Cys297-Cys366. Residue Asn154 is glycosylated (N-linked (GlcNAc...) asparagine). Residue Ser194 is part of the active site. N-linked (GlcNAc...) asparagine glycosylation is present at Asn268. Residues 303-362 (IKKVTPANTKLPKSFQHLGTTTKPLAVRTRMHGRAWPLRAPVRAGRVPSWQEFARGSRPS) constitute a propeptide, linker peptide. An N-linked (GlcNAc...) asparagine glycan is attached at Asn418. Catalysis depends on residues Asp434 and His487. Positions 508–510 (SKL) match the Microbody targeting signal motif.

This sequence belongs to the peptidase S10 family.

It carries out the reaction Release of a C-terminal amino acid with broad specificity.. The polypeptide is Serine carboxypeptidase 1 (CBP1) (Oryza sativa subsp. japonica (Rice)).